The primary structure comprises 80 residues: Conotoxin Lt6.2 (80 aa).

Residues 1-24 (MKLTRVLIIAVLFLTAYQLTTVET) form the signal peptide. The propeptide occupies 25 to 47 (YSRGKWMHRALRSTGKNPKVTRE). 3 disulfides stabilise this stretch: Cys48-Cys62, Cys55-Cys66, and Cys61-Cys73.

Belongs to the conotoxin O1 superfamily. Expressed by the venom duct.

The protein resides in the secreted. The polypeptide is Conotoxin Lt6.2 (Conus litteratus (Lettered cone)).